The primary structure comprises 138 residues: Probable glycine cleavage system H protein 1 (138 aa).

One can recognise a Lipoyl-binding domain in the interval 30 to 112 (IATVGITDYA…YGRGWIFKLK (83 aa)). N6-lipoyllysine is present on Lys-71.

The protein belongs to the GcvH family. As to quaternary structure, the glycine cleavage system is composed of four proteins: P, T, L and H. (R)-lipoate is required as a cofactor.

Its function is as follows. The glycine cleavage system catalyzes the degradation of glycine. The H protein shuttles the methylamine group of glycine from the P protein to the T protein. This chain is Probable glycine cleavage system H protein 1, found in Sulfolobus acidocaldarius (strain ATCC 33909 / DSM 639 / JCM 8929 / NBRC 15157 / NCIMB 11770).